The primary structure comprises 476 residues: Probable cytosolic Fe-S cluster assembly factor GF22738 (476 aa).

Positions 23, 68, 71, 74, 187, 243, 395, and 399 each coordinate [4Fe-4S] cluster.

Belongs to the NARF family.

In terms of biological role, component of the cytosolic iron-sulfur (Fe/S) protein assembly machinery. Required for maturation of extramitochondrial Fe/S proteins. This chain is Probable cytosolic Fe-S cluster assembly factor GF22738, found in Drosophila ananassae (Fruit fly).